Consider the following 101-residue polypeptide: Apolipoprotein C-II (101 aa).

The first 22 residues, 1–22 (MGTRFLLALCLVLLVLGFEVQG), serve as a signal peptide directing secretion. Positions 23–28 (AQLPQQ) are cleaved as a propeptide — removed in mature form. The segment at 66–74 (AVDEKLRDL) is lipid binding. The lipoprotein lipase cofactor stretch occupies residues 78-101 (STAAMSTYTGIFTDQVLSVLKGEE).

The protein belongs to the apolipoprotein C2 family. In terms of processing, proapolipoprotein C-II is synthesized as a sialic acid containing glycoprotein which is subsequently desialylated prior to its proteolytic processing. Proapolipoprotein C-II, the major form found in plasma undergoes proteolytic cleavage of its N-terminal hexapeptide to generate apolipoprotein C-II, which occurs as the minor form in plasma.

The protein resides in the secreted. Its function is as follows. Component of chylomicrons, very low-density lipoproteins (VLDL), low-density lipoproteins (LDL), and high-density lipoproteins (HDL) in plasma. Plays an important role in lipoprotein metabolism as an activator of lipoprotein lipase. Both proapolipoprotein C-II and apolipoprotein C-II can activate lipoprotein lipase. The chain is Apolipoprotein C-II (APOC2) from Papio anubis (Olive baboon).